The sequence spans 268 residues: Cyclohexadienyl dehydratase (268 aa).

Residues 1–25 form the signal peptide; the sequence is MPKSFRHLVQALACLALLASASLQA.

It belongs to the bacterial solute-binding protein 3 family. As to quaternary structure, homodimer.

It localises to the periplasm. It carries out the reaction prephenate + H(+) = 3-phenylpyruvate + CO2 + H2O. It catalyses the reaction L-arogenate + H(+) = L-phenylalanine + CO2 + H2O. It participates in amino-acid biosynthesis; L-phenylalanine biosynthesis; L-phenylalanine from L-arogenate: step 1/1. The protein operates within amino-acid biosynthesis; L-phenylalanine biosynthesis; phenylpyruvate from prephenate: step 1/1. In terms of biological role, forms alternative pathway for phenylalanine biosynthesis. Can catalyze two reactions: prephenate dehydratase and arogenate dehydratase. May have a role in chemotaxis or transport. This is Cyclohexadienyl dehydratase (pheC) from Pseudomonas aeruginosa (strain ATCC 15692 / DSM 22644 / CIP 104116 / JCM 14847 / LMG 12228 / 1C / PRS 101 / PAO1).